Consider the following 277-residue polypeptide: S-formylglutathione hydrolase FrmB (277 aa).

Residues S145, D221, and H254 each act as charge relay system in the active site.

The protein belongs to the esterase D family.

The catalysed reaction is S-formylglutathione + H2O = formate + glutathione + H(+). Serine hydrolase involved in the detoxification of formaldehyde. Hydrolyzes S-formylglutathione to glutathione and formate. This Escherichia coli O157:H7 protein is S-formylglutathione hydrolase FrmB (frmB).